A 702-amino-acid chain; its full sequence is Mesothelin-like protein (702 aa).

The N-terminal stretch at methionine 1 to alanine 35 is a signal peptide. At lysine 36–tryptophan 638 the chain is on the extracellular side. Asparagine 122, asparagine 307, and asparagine 424 each carry an N-linked (GlcNAc...) asparagine glycan. The interval glutamine 588–threonine 611 is disordered. The helical transmembrane segment at alanine 639–valine 668 threads the bilayer. Residues aspartate 669 to leucine 702 lie on the Cytoplasmic side of the membrane.

This sequence belongs to the mesothelin family.

It localises to the membrane. Functionally, may play a role in cellular adhesion. The sequence is that of Mesothelin-like protein (MSLNL) from Homo sapiens (Human).